The chain runs to 328 residues: Phenylalanine--tRNA ligase alpha subunit (328 aa).

Glu-245 is a Mg(2+) binding site.

Belongs to the class-II aminoacyl-tRNA synthetase family. Phe-tRNA synthetase alpha subunit type 1 subfamily. As to quaternary structure, tetramer of two alpha and two beta subunits. It depends on Mg(2+) as a cofactor.

It is found in the cytoplasm. It catalyses the reaction tRNA(Phe) + L-phenylalanine + ATP = L-phenylalanyl-tRNA(Phe) + AMP + diphosphate + H(+). The polypeptide is Phenylalanine--tRNA ligase alpha subunit (Helicobacter pylori (strain Shi470)).